Here is a 292-residue protein sequence, read N- to C-terminus: RNA polymerase II transcriptional coactivator SUB1 (292 aa).

Disordered stretches follow at residues 1–31 (MSYY…GGMP) and 117–292 (LLSD…SEEE). Over residues 20–31 (LSNSNNNNGGMP) the composition is skewed to low complexity. Ser119 is subject to Phosphoserine. Composition is skewed to basic and acidic residues over residues 133-166 (NNDK…LEPR), 179-191 (PHEE…EREA), 204-240 (KQQE…KIAE), and 251-267 (AKKE…KDAN). Phosphoserine occurs at positions 268, 269, and 289.

It belongs to the transcriptional coactivator PC4 family.

It is found in the nucleus. Plays a role in the release of TFIIB from the transcription complex during transcription initiation. Binds to TFIIB and specifically inhibits the formation of the TBP-TFIIB-promoter complexes. The polypeptide is RNA polymerase II transcriptional coactivator SUB1 (SUB1) (Saccharomyces cerevisiae (strain ATCC 204508 / S288c) (Baker's yeast)).